A 352-amino-acid polypeptide reads, in one-letter code: MVFRIASSPYTHNQRQTSRIMLLVLIAALPGIAAQTWFFGWGTLFQIVLAAITALVAEAIVLRLRKQSVASHLQDYSALLTGLLLAVSIPPLAPWWMVVLGTGFAIIIAKQLYGGLGQNPFNPAMIGYVVLLISFPVQMTSWLPPYEIAATTPDMLDTLRMIFTGHTASGGDMTLLRIGIDGISQATPLDTFKTSLRAGHSVEQIMQYPIYSGALAGVGWQWVNLAWLVGGVFLLWQKAIRWHIPVSFLLTLALCAALGWLFSPATLASPQLHLLSGATMLGAFFILTDPVTASTTNRGRLIFGALAGVLVWLIRSFGGYPDGVAFAVLLANITVPLIDYYTRPRVYGHRKG.

Transmembrane regions (helical) follow at residues 20–40 (IMLL…WFFG), 42–62 (GTLF…AIVL), 69–91 (VASH…SIPP), and 123–143 (PAMI…TSWL). Threonine 187 is modified (FMN phosphoryl threonine). The next 5 helical transmembrane spans lie at 215–235 (LAGV…VFLL), 242–262 (WHIP…GWLF), 267–287 (LASP…FFIL), 301–321 (LIFG…GGYP), and 322–342 (DGVA…DYYT).

The protein belongs to the NqrB/RnfD family. As to quaternary structure, the complex is composed of six subunits: RsxA, RsxB, RsxC, RsxD, RsxE and RsxG. FMN is required as a cofactor.

It is found in the cell inner membrane. Part of a membrane-bound complex that couples electron transfer with translocation of ions across the membrane. Required to maintain the reduced state of SoxR. This chain is Ion-translocating oxidoreductase complex subunit D, found in Salmonella choleraesuis (strain SC-B67).